Here is a 249-residue protein sequence, read N- to C-terminus: Green-light absorbing proteorhodopsin (249 aa).

The signal sequence occupies residues 1–17 (MKLLLILGSVIALPTFA). 7 helical membrane-spanning segments follow: residues 30 to 49 (GVSFWLVTAALLASTVFFFV), 62 to 84 (LTVSGLVTGIAFWHYMYMRGVWI), 99 to 121 (LLTVPLLICEFYLILAAATNVAG), 128 to 147 (LVGSLVMLVFGYMGEAGIMA), 151 to 168 (AFIIGCLAWVYMIYELWA), 189 to 211 (MMYIIIFGWAIYPVGYFTGYLMG), and 221 to 243 (LIYNLADFVNKILFGLIIWNVAV). K231 carries the post-translational modification N6-(retinylidene)lysine.

This sequence belongs to the archaeal/bacterial/fungal opsin family. In terms of processing, contains one covalently linked retinal chromophore.

The protein resides in the cell membrane. Functionally, light-driven proton pump that generates photothrophic energy. The protein is Green-light absorbing proteorhodopsin of Gamma-proteobacterium EBAC31A08.